Here is a 262-residue protein sequence, read N- to C-terminus: Spindlin-1 (262 aa).

The tract at residues Met-1 to Arg-51 is disordered. Residues Lys-7 and Lys-28 each participate in a glycyl lysine isopeptide (Lys-Gly) (interchain with G-Cter in SUMO2) cross-link. Positions Met-27–Ser-38 are enriched in basic residues. Residue Lys-44 is modified to N6-acetyllysine; alternate. Lys-44 participates in a covalent cross-link: Glycyl lysine isopeptide (Lys-Gly) (interchain with G-Cter in SUMO2); alternate. A tudor-like domain 1 region spans residues Ile-53–Asp-116. Positions Gly-93–Tyr-98 are histone H3K4me3 and H3R8me2a binding. Phosphoserine; by AURKA is present on residues Ser-109 and Ser-124. Positions Met-132 to Met-193 are tudor-like domain 2. Residue Glu-142 is a region of interest, histone H3K4me3 and H3R8me2a binding. The residue at position 199 (Ser-199) is a Phosphoserine. The interval Leu-213–Ser-262 is tudor-like domain 3. The histone H3K4me3 and H3R8me2a binding stretch occupies residues Asp-250–His-252.

This sequence belongs to the SPIN/STSY family. Homodimer; may form higher-order oligomers. Interacts with TCF7L2/TCF4; the interaction is direct. Interacts with HABP4 and SERBP1. Interacts with SPINDOC; SPINDOC stabilizes SPIN1 and enhances its association with bivalent H3K4me3K9me3 mark. Interacts with SPOCD1; promoting recruitment of PIWIL4 and SPOCD1 to transposons. Phosphorylated during oocyte meiotic maturation. In terms of tissue distribution, highly expressed in ovarian cancer tissues.

The protein localises to the nucleus. Its subcellular location is the nucleolus. Its function is as follows. Chromatin reader that specifically recognizes and binds histone H3 both trimethylated at 'Lys-4' and 'Lys-9' (H3K4me3K9me3) and is involved in piRNA-mediated retrotransposon silencing during spermatogenesis. Plays a key role in the initiation of the PIWIL4-piRNA pathway, a pathway that directs transposon DNA methylation and silencing in the male embryonic germ cells, by promoting recruitment of DNA methylation machinery to transposons: binds young, but not old, LINE1 transposons, which are specifically marked with H3K4me3K9me3, and promotes the recruitment of PIWIL4 and SPOCD1 to transposons, leading to piRNA-directed DNA methylation. Also recognizes and binds histone H3 both trimethylated at 'Lys-4' and asymmetrically dimethylated at 'Arg-8' (H3K4me3 and H3R8me2a) and acts as an activator of Wnt signaling pathway downstream of PRMT2. In case of cancer, promotes cell cancer proliferation via activation of the Wnt signaling pathway. Overexpression induces metaphase arrest and chromosomal instability. Localizes to active rDNA loci and promotes the expression of rRNA genes. May play a role in cell-cycle regulation during the transition from gamete to embryo. Involved in oocyte meiotic resumption, a process that takes place before ovulation to resume meiosis of oocytes blocked in prophase I: may act by regulating maternal transcripts to control meiotic resumption. This Homo sapiens (Human) protein is Spindlin-1.